The primary structure comprises 253 residues: Vacuolar v-SNARE NYV1 (253 aa).

Topologically, residues 1 to 231 are cytoplasmic; the sequence is MKRFNVSYVE…EIMWWQKVKN (231 aa). A disordered region spans residues 147–166; it reads LNSSGNGQSSNGNGQNTISD. The span at 148-162 shows a compositional bias: low complexity; the sequence is NSSGNGQSSNGNGQN. The region spanning 167–227 is the v-SNARE coiled-coil homology domain; sequence IGDATEDQIK…VNIKEIMWWQ (61 aa). The chain crosses the membrane as a helical; Anchor for type IV membrane protein span at residues 232–252; that stretch reads ITLLTFTIILFVSAAFMFFYL. Residue tryptophan 253 is a topological domain, vacuolar.

Belongs to the synaptobrevin family. As to quaternary structure, present in a pentameric cis-SNARE complex composed of the v-SNAREs NYV1, VTI1 and YKT6, and the t-SNAREs VAM3 and VAM7 on vacuolar membranes. Interacts in trans with the cognate t-SNARE VAM3 during the docking step of homotypic vacuolar fusion. Interacts with the vacuolar transporter chaperone (VTC) complex and the vacuolar Ca(2+)-ATPase PMC1.

It is found in the vacuole membrane. Functionally, vacuolar v-SNARE required for docking. Only involved in homotypic vacuole fusion. Required for Ca(2+) efflux from the vacuolar lumen, a required signal for subsequent membrane fusion events, by inhibiting vacuolar Ca(2+)-ATPase PMC1 and promoting Ca(2+) release when forming trans-SNARE assemblies during the docking step. The sequence is that of Vacuolar v-SNARE NYV1 (NYV1) from Saccharomyces cerevisiae (strain ATCC 204508 / S288c) (Baker's yeast).